The primary structure comprises 430 residues: Putative chloroquine resistance transporter (430 aa).

The interval 1-22 (MLKEGSSLDLSASSSSGTLRSD) is disordered. At 1–53 (MLKEGSSLDLSASSSSGTLRSDNSFGNSPLDRITSLLILIYKSIRACFKWIYS) the chain is on the cytoplasmic side. A compositionally biased stretch (low complexity) spans 7–21 (SLDLSASSSSGTLRS). A helical transmembrane segment spans residues 54–74 (KSFGIICILFVILDVLTTVFF). Residues 75–88 (KRFIDHTKNYVMFT) are Vacuolar-facing. Residues 89–109 (IQVIIFTFWIIVCCIAILCFL) traverse the membrane as a helical segment. The Cytoplasmic portion of the chain corresponds to 110–122 (FNREYMKRHFNVR). Residues 123-143 (PLVFLGFLDMLSTGLSANGSA) traverse the membrane as a helical segment. The Vacuolar segment spans residues 144–147 (HTSG). The chain crosses the membrane as a helical span at residues 148-168 (LMLVLLGQISVPLTMVSCKLI). Residues 169–173 (LSKKY) lie on the Cytoplasmic side of the membrane. The chain crosses the membrane as a helical span at residues 174 to 194 (HHYQYISSAIILTFAVLKPIL). Residue Asn195 is glycosylated (N-linked (GlcNAc...) asparagine). The Vacuolar segment spans residues 195 to 206 (NRTDTTDNRFYN). A helical transmembrane segment spans residues 207–223 (NMLYLLASVPDSIASAL). Residues 224-239 (REKQYTSKFFHVVKYQ) are Cytoplasmic-facing. Residues 240 to 260 (FFGFLFHFFYNILYTLLFTLP) form a helical membrane-spanning segment. The Vacuolar portion of the chain corresponds to 261–306 (FNSVKGYFDSLYKLCVNGYKCIFFGVNTITENCGPTLIPTCDNCLE). 2 disulfides stabilise this stretch: Cys281/Cys304 and Cys293/Cys301. A helical transmembrane segment spans residues 307 to 329 (AFKIYCLYILFSSAIRVAYVFIM). Topologically, residues 330-335 (LDGSVT) are cytoplasmic. The helical transmembrane segment at 336–358 (FTLLLGTVKVPLTSIAFSLRFIA) threads the bilayer. Residues 359–364 (GDSTTS) are Vacuolar-facing. Residues 365–385 (FNLLDVVCFLGIVAGLLLYAL) traverse the membrane as a helical segment. The Cytoplasmic portion of the chain corresponds to 386-430 (GSKKIQEETDLLESPLIDDAESEHELLSTGTEKLMRSEICHDLFT).

It belongs to the CRT-like transporter family.

It is found in the vacuole membrane. In terms of biological role, nutrient transporter. Involved in maintaining the osmotic homeostasis of the digestive vacuole. This Theileria annulata protein is Putative chloroquine resistance transporter.